Here is a 139-residue protein sequence, read N- to C-terminus: Membrane protein YqfB (139 aa).

The chain crosses the membrane as a helical span at residues 3–23; it reads DLLTNPLIIAAIIGIISAIFG. Residues 25–87 form a disordered region; that stretch reads KSKEEKQNSQ…TARNLKGLER (63 aa). Positions 62–97 form a coiled coil; that stretch reads NRMEQARREAEERRRETARNLKGLERDLAAAKQKTV. Residues 65–87 show a composition bias toward basic and acidic residues; the sequence is EQARREAEERRRETARNLKGLER.

It is found in the cell membrane. The protein is Membrane protein YqfB (yqfB) of Bacillus subtilis (strain 168).